The following is a 227-amino-acid chain: Cytochrome c oxidase subunit 2 (227 aa).

At 1 to 14 (MAYPFQLGLQDATS) the chain is on the mitochondrial intermembrane side. A helical membrane pass occupies residues 15 to 45 (PIMEELTNFHDHTLMIVFLISSLVLYIISLM). At 46–59 (LTTKLTHTSTMDAQ) the chain is on the mitochondrial matrix side. The helical transmembrane segment at 60-87 (EVETIWTILPAAILILIALPSLRILYMM) threads the bilayer. Topologically, residues 88–227 (DEINNPVLTV…YFENWSTSMI (140 aa)) are mitochondrial intermembrane. His-161, Cys-196, Glu-198, Cys-200, His-204, and Met-207 together coordinate Cu cation. Position 198 (Glu-198) interacts with Mg(2+). Phosphotyrosine is present on Tyr-218.

Belongs to the cytochrome c oxidase subunit 2 family. As to quaternary structure, component of the cytochrome c oxidase (complex IV, CIV), a multisubunit enzyme composed of 14 subunits. The complex is composed of a catalytic core of 3 subunits MT-CO1, MT-CO2 and MT-CO3, encoded in the mitochondrial DNA, and 11 supernumerary subunits COX4I, COX5A, COX5B, COX6A, COX6B, COX6C, COX7A, COX7B, COX7C, COX8 and NDUFA4, which are encoded in the nuclear genome. The complex exists as a monomer or a dimer and forms supercomplexes (SCs) in the inner mitochondrial membrane with NADH-ubiquinone oxidoreductase (complex I, CI) and ubiquinol-cytochrome c oxidoreductase (cytochrome b-c1 complex, complex III, CIII), resulting in different assemblies (supercomplex SCI(1)III(2)IV(1) and megacomplex MCI(2)III(2)IV(2)). Found in a complex with TMEM177, COA6, COX18, COX20, SCO1 and SCO2. Interacts with TMEM177 in a COX20-dependent manner. Interacts with COX20. Interacts with COX16. Cu cation is required as a cofactor.

The protein localises to the mitochondrion inner membrane. It catalyses the reaction 4 Fe(II)-[cytochrome c] + O2 + 8 H(+)(in) = 4 Fe(III)-[cytochrome c] + 2 H2O + 4 H(+)(out). Its function is as follows. Component of the cytochrome c oxidase, the last enzyme in the mitochondrial electron transport chain which drives oxidative phosphorylation. The respiratory chain contains 3 multisubunit complexes succinate dehydrogenase (complex II, CII), ubiquinol-cytochrome c oxidoreductase (cytochrome b-c1 complex, complex III, CIII) and cytochrome c oxidase (complex IV, CIV), that cooperate to transfer electrons derived from NADH and succinate to molecular oxygen, creating an electrochemical gradient over the inner membrane that drives transmembrane transport and the ATP synthase. Cytochrome c oxidase is the component of the respiratory chain that catalyzes the reduction of oxygen to water. Electrons originating from reduced cytochrome c in the intermembrane space (IMS) are transferred via the dinuclear copper A center (CU(A)) of subunit 2 and heme A of subunit 1 to the active site in subunit 1, a binuclear center (BNC) formed by heme A3 and copper B (CU(B)). The BNC reduces molecular oxygen to 2 water molecules using 4 electrons from cytochrome c in the IMS and 4 protons from the mitochondrial matrix. The chain is Cytochrome c oxidase subunit 2 (MT-CO2) from Arvicanthis somalicus (Neumann's grass rat).